A 460-amino-acid polypeptide reads, in one-letter code: Kynurenine 3-monooxygenase (460 aa).

Residues Val13, 32-34 (DFR), and Ala53 each bind FAD. The L-kynurenine site is built by Arg83 and Tyr97. FAD contacts are provided by residues Arg109, Leu133, Tyr195, Asp314, and 325-328 (QGMN). The L-kynurenine site is built by Asn373 and Tyr408.

It belongs to the aromatic-ring hydroxylase family. KMO subfamily. FAD serves as cofactor.

The protein localises to the mitochondrion outer membrane. It carries out the reaction L-kynurenine + NADPH + O2 + H(+) = 3-hydroxy-L-kynurenine + NADP(+) + H2O. It participates in cofactor biosynthesis; NAD(+) biosynthesis; quinolinate from L-kynurenine: step 1/3. Functionally, catalyzes the hydroxylation of L-kynurenine (L-Kyn) to form 3-hydroxy-L-kynurenine (L-3OHKyn). Required for synthesis of quinolinic acid. The chain is Kynurenine 3-monooxygenase from Saccharomyces cerevisiae (strain ATCC 204508 / S288c) (Baker's yeast).